Reading from the N-terminus, the 95-residue chain is Probable FAD-linked sulfhydryl oxidase OPG072 (95 aa).

Topologically, residues 1–8 (MNPKHWGR) are intravirion. The ERV/ALR sulfhydryl oxidase domain occupies 1–95 (MNPKHWGRAV…AIDVSKVKPL (95 aa)). A helical membrane pass occupies residues 9–25 (AVWTIIFIVLSQAGLDG). The Virion surface segment spans residues 26-95 (NIEACKRKLY…AIDVSKVKPL (70 aa)). A disulfide bridge links Cys43 with Cys46.

The protein belongs to the orthopoxvirus OPG072 family. Interacts with OPG128; this interaction involves formation of a transient disulfide-bonded intermediate, allowing disulfide bond transfer. FAD is required as a cofactor.

It localises to the virion membrane. The protein resides in the host cytoplasm. It carries out the reaction 2 R'C(R)SH + O2 = R'C(R)S-S(R)CR' + H2O2. Its function is as follows. FAD-dependent sulfhydryl oxidase that catalyzes disulfide bond formation. The complete pathway for formation of disulfide bonds in intracellular virion membrane proteins sequentially involves thiol-disulfide transfer between OPG072, OPG128 and OPG088. This chain is Probable FAD-linked sulfhydryl oxidase OPG072 (OPG072), found in Vaccinia virus (strain Copenhagen) (VACV).